The following is a 154-amino-acid chain: MATFSQKPTEVVKKWVIIDAENLVLGRLAAFVANRLRGKHKATFTPHVDDGDNVIVINADKIALTGKKYTDKKYYWHTGYIGGIKERTARQLLEGRFPERVVEKAVERMIPRGPLGRRQLKNLRVYAGSQHPHEAQQPESLDVGALNRKNKRIA.

The protein belongs to the universal ribosomal protein uL13 family. In terms of assembly, part of the 50S ribosomal subunit.

Its function is as follows. This protein is one of the early assembly proteins of the 50S ribosomal subunit, although it is not seen to bind rRNA by itself. It is important during the early stages of 50S assembly. The polypeptide is Large ribosomal subunit protein uL13 (Bartonella tribocorum (strain CIP 105476 / IBS 506)).